Reading from the N-terminus, the 522-residue chain is Glucans biosynthesis protein G (522 aa).

The first 33 residues, 1–33 (MLVNILSKKPRAASVRWLGATVLFTLLTSPAWA), serve as a signal peptide directing secretion.

The protein belongs to the OpgD/OpgG family.

The protein resides in the periplasm. It functions in the pathway glycan metabolism; osmoregulated periplasmic glucan (OPG) biosynthesis. Involved in the biosynthesis of osmoregulated periplasmic glucans (OPGs). The chain is Glucans biosynthesis protein G from Serratia proteamaculans (strain 568).